A 121-amino-acid polypeptide reads, in one-letter code: Large ribosomal subunit protein bL20 (121 aa).

It belongs to the bacterial ribosomal protein bL20 family.

Its function is as follows. Binds directly to 23S ribosomal RNA and is necessary for the in vitro assembly process of the 50S ribosomal subunit. It is not involved in the protein synthesizing functions of that subunit. The sequence is that of Large ribosomal subunit protein bL20 from Ruegeria pomeroyi (strain ATCC 700808 / DSM 15171 / DSS-3) (Silicibacter pomeroyi).